A 616-amino-acid chain; its full sequence is Dihydroxy-acid dehydratase (616 aa).

Residue Asp-81 participates in Mg(2+) binding. Cys-122 contacts [2Fe-2S] cluster. Asp-123 and Lys-124 together coordinate Mg(2+). Position 124 is an N6-carboxylysine (Lys-124). [2Fe-2S] cluster is bound at residue Cys-195. Glu-491 contacts Mg(2+). The Proton acceptor role is filled by Ser-517.

Belongs to the IlvD/Edd family. As to quaternary structure, homodimer. It depends on [2Fe-2S] cluster as a cofactor. The cofactor is Mg(2+).

It catalyses the reaction (2R)-2,3-dihydroxy-3-methylbutanoate = 3-methyl-2-oxobutanoate + H2O. The enzyme catalyses (2R,3R)-2,3-dihydroxy-3-methylpentanoate = (S)-3-methyl-2-oxopentanoate + H2O. The protein operates within amino-acid biosynthesis; L-isoleucine biosynthesis; L-isoleucine from 2-oxobutanoate: step 3/4. It functions in the pathway amino-acid biosynthesis; L-valine biosynthesis; L-valine from pyruvate: step 3/4. Functionally, functions in the biosynthesis of branched-chain amino acids. Catalyzes the dehydration of (2R,3R)-2,3-dihydroxy-3-methylpentanoate (2,3-dihydroxy-3-methylvalerate) into 2-oxo-3-methylpentanoate (2-oxo-3-methylvalerate) and of (2R)-2,3-dihydroxy-3-methylbutanoate (2,3-dihydroxyisovalerate) into 2-oxo-3-methylbutanoate (2-oxoisovalerate), the penultimate precursor to L-isoleucine and L-valine, respectively. The sequence is that of Dihydroxy-acid dehydratase from Shigella sonnei (strain Ss046).